The sequence spans 159 residues: Ribosomal RNA large subunit methyltransferase H (159 aa).

Residues Leu-76, Gly-107, and Leu-126–Met-131 contribute to the S-adenosyl-L-methionine site.

The protein belongs to the RNA methyltransferase RlmH family. In terms of assembly, homodimer.

It localises to the cytoplasm. The enzyme catalyses pseudouridine(1915) in 23S rRNA + S-adenosyl-L-methionine = N(3)-methylpseudouridine(1915) in 23S rRNA + S-adenosyl-L-homocysteine + H(+). Specifically methylates the pseudouridine at position 1915 (m3Psi1915) in 23S rRNA. The polypeptide is Ribosomal RNA large subunit methyltransferase H (Acinetobacter baylyi (strain ATCC 33305 / BD413 / ADP1)).